Consider the following 90-residue polypeptide: Iron oxidase (90 aa).

The segment at residues 1-37 (MSEKDKMITRRDALRNIAVVVGSVATTTMMGVGVADA) is a signal peptide (tat-type signal). The [4Fe-4S] cluster site is built by Cys57, Cys60, Cys69, and Cys82.

It belongs to the high-potential iron-sulfur protein (HiPIP) family. Homomultimer. Post-translationally, predicted to be exported by the Tat system. The position of the signal peptide cleavage has been experimentally proven.

Its subcellular location is the periplasm. Its function is as follows. Catalyzes the oxidation of Fe(2+) to Fe(3+) coupled to cytochrome c552 reduction. The polypeptide is Iron oxidase (iro) (Acidithiobacillus ferrooxidans (Thiobacillus ferrooxidans)).